We begin with the raw amino-acid sequence, 622 residues long: V-type ATP synthase subunit I 1 (622 aa).

Transmembrane regions (helical) follow at residues tryptophan 306–valine 326, isoleucine 328–glycine 348, proline 373–cysteine 393, glutamine 428–valine 448, alanine 459–valine 479, proline 485–valine 505, valine 532–isoleucine 552, and proline 562–leucine 582.

Belongs to the V-ATPase 116 kDa subunit family.

Its subcellular location is the cell membrane. Functionally, produces ATP from ADP in the presence of a proton gradient across the membrane. This is V-type ATP synthase subunit I 1 (atpI1) from Treponema pallidum (strain Nichols).